The sequence spans 481 residues: Argininosuccinate lyase (481 aa).

Belongs to the lyase 1 family. Argininosuccinate lyase subfamily.

It is found in the cytoplasm. The enzyme catalyses 2-(N(omega)-L-arginino)succinate = fumarate + L-arginine. The protein operates within amino-acid biosynthesis; L-arginine biosynthesis; L-arginine from L-ornithine and carbamoyl phosphate: step 3/3. The protein is Argininosuccinate lyase of Kineococcus radiotolerans (strain ATCC BAA-149 / DSM 14245 / SRS30216).